The following is a 608-amino-acid chain: Dihydroxy-acid dehydratase, chloroplastic (608 aa).

A chloroplast-targeting transit peptide spans 1-34 (MQATIFSPRATLFPCKPLLPSHNVNSRRPSIISC). S35 is subject to N-acetylserine. C100 provides a ligand contact to [2Fe-2S] cluster. D132 lines the Mg(2+) pocket. C173 is a binding site for [2Fe-2S] cluster. D174 is a Mg(2+) binding site. Residue C245 coordinates [2Fe-2S] cluster. E497 serves as a coordination point for Mg(2+). S523 serves as the catalytic Proton acceptor.

This sequence belongs to the IlvD/Edd family. [2Fe-2S] cluster is required as a cofactor. Requires Mg(2+) as cofactor.

The protein localises to the plastid. It is found in the chloroplast. The enzyme catalyses (2R)-2,3-dihydroxy-3-methylbutanoate = 3-methyl-2-oxobutanoate + H2O. It catalyses the reaction (2R,3R)-2,3-dihydroxy-3-methylpentanoate = (S)-3-methyl-2-oxopentanoate + H2O. It functions in the pathway amino-acid biosynthesis; L-isoleucine biosynthesis; L-isoleucine from 2-oxobutanoate: step 3/4. The protein operates within amino-acid biosynthesis; L-valine biosynthesis; L-valine from pyruvate: step 3/4. Its activity is regulated as follows. Is highly competitively inhibited by the fungal sesquiterpenoid aspterric acid, which is effective as a herbicide in spray applications. Functionally, functions in the biosynthesis of branched-chain amino acids. Catalyzes the dehydration of (2R,3R)-2,3-dihydroxy-3-methylpentanoate (2,3-dihydroxy-3-methylvalerate) into 2-oxo-3-methylpentanoate (2-oxo-3-methylvalerate) and of (2R)-2,3-dihydroxy-3-methylbutanoate (2,3-dihydroxyisovalerate) into 2-oxo-3-methylbutanoate (2-oxoisovalerate), the penultimate precursor to L-isoleucine and L-valine, respectively. This chain is Dihydroxy-acid dehydratase, chloroplastic, found in Arabidopsis thaliana (Mouse-ear cress).